Consider the following 301-residue polypeptide: GTPase Era (301 aa).

One can recognise an Era-type G domain in the interval Tyr-7–Glu-175. Positions Gly-15–Ser-22 are G1. Gly-15 to Ser-22 provides a ligand contact to GTP. Residues Gln-41–His-45 are G2. A G3 region spans residues Asp-62–Gly-65. GTP is bound by residues Asp-62 to Leu-66 and Asn-124 to Asp-127. Residues Asn-124 to Asp-127 form a G4 region. The interval Ile-154–Ala-156 is G5. The 78-residue stretch at Leu-206–Ser-283 folds into the KH type-2 domain.

This sequence belongs to the TRAFAC class TrmE-Era-EngA-EngB-Septin-like GTPase superfamily. Era GTPase family. Monomer.

It localises to the cytoplasm. The protein resides in the cell inner membrane. Its function is as follows. An essential GTPase that binds both GDP and GTP, with rapid nucleotide exchange. Plays a role in 16S rRNA processing and 30S ribosomal subunit biogenesis and possibly also in cell cycle regulation and energy metabolism. In Escherichia fergusonii (strain ATCC 35469 / DSM 13698 / CCUG 18766 / IAM 14443 / JCM 21226 / LMG 7866 / NBRC 102419 / NCTC 12128 / CDC 0568-73), this protein is GTPase Era.